The primary structure comprises 1703 residues: Gingipain R1 (1703 aa).

An N-terminal signal peptide occupies residues 1-20; the sequence is MNKFVSIALCSSLLGGMAFA. Residues 21-224 constitute a propeptide that is removed on maturation; that stretch reads QQTELGRNPN…RMFMNYEPGR (204 aa). D302, V324, D327, Y329, E331, E385, and H390 together coordinate Ca(2+). The active-site Proton donor is H435. Catalysis depends on C468, which acts as the Nucleophile. Positions 473, 482, 516, 517, 520, and 526 each coordinate Ca(2+). A disordered region spans residues 940-968; the sequence is WDAPNGTPNPNPNPNPNPNPGTTTLSESF. Over residues 946-958 the composition is skewed to pro residues; it reads TPNPNPNPNPNPN.

This sequence belongs to the peptidase C25 family.

It is found in the secreted. It catalyses the reaction Hydrolysis of proteins and small molecule substrates, with a preference for Arg in P1.. Functionally, thiol protease. Acts synergistically with RgpB to catalyze the maturation of fimbrial subunits, such as FimA. Its proteolytic activity is a major factor in both periodontal tissue destruction and in evasion of host defense mechanisms. This chain is Gingipain R1, found in Porphyromonas gingivalis (strain ATCC 33277 / DSM 20709 / CIP 103683 / JCM 12257 / NCTC 11834 / 2561).